The chain runs to 227 residues: Cytochrome c oxidase subunit 2 (227 aa).

The Mitochondrial intermembrane segment spans residues 1–14; the sequence is MAHPVQLGFQDAAS. Residues 15–45 traverse the membrane as a helical segment; the sequence is PIMEELLYFHDHTLMIMFLISSLVLYIISLM. The Mitochondrial matrix segment spans residues 46–59; that stretch reads LTTKLTHTSTMDAQ. The helical transmembrane segment at 60-87 threads the bilayer; the sequence is EVETVWTILPAAILILIALPSLRILYMM. At 88 to 227 the chain is on the mitochondrial intermembrane side; that stretch reads DEITSPSLTL…HFEEWLLFTL (140 aa). H161, C196, E198, C200, H204, and M207 together coordinate Cu cation. Residue E198 participates in Mg(2+) binding.

This sequence belongs to the cytochrome c oxidase subunit 2 family. In terms of assembly, component of the cytochrome c oxidase (complex IV, CIV), a multisubunit enzyme composed of 14 subunits. The complex is composed of a catalytic core of 3 subunits MT-CO1, MT-CO2 and MT-CO3, encoded in the mitochondrial DNA, and 11 supernumerary subunits COX4I, COX5A, COX5B, COX6A, COX6B, COX6C, COX7A, COX7B, COX7C, COX8 and NDUFA4, which are encoded in the nuclear genome. The complex exists as a monomer or a dimer and forms supercomplexes (SCs) in the inner mitochondrial membrane with NADH-ubiquinone oxidoreductase (complex I, CI) and ubiquinol-cytochrome c oxidoreductase (cytochrome b-c1 complex, complex III, CIII), resulting in different assemblies (supercomplex SCI(1)III(2)IV(1) and megacomplex MCI(2)III(2)IV(2)). Found in a complex with TMEM177, COA6, COX18, COX20, SCO1 and SCO2. Interacts with TMEM177 in a COX20-dependent manner. Interacts with COX20. Interacts with COX16. It depends on Cu cation as a cofactor.

Its subcellular location is the mitochondrion inner membrane. It catalyses the reaction 4 Fe(II)-[cytochrome c] + O2 + 8 H(+)(in) = 4 Fe(III)-[cytochrome c] + 2 H2O + 4 H(+)(out). Component of the cytochrome c oxidase, the last enzyme in the mitochondrial electron transport chain which drives oxidative phosphorylation. The respiratory chain contains 3 multisubunit complexes succinate dehydrogenase (complex II, CII), ubiquinol-cytochrome c oxidoreductase (cytochrome b-c1 complex, complex III, CIII) and cytochrome c oxidase (complex IV, CIV), that cooperate to transfer electrons derived from NADH and succinate to molecular oxygen, creating an electrochemical gradient over the inner membrane that drives transmembrane transport and the ATP synthase. Cytochrome c oxidase is the component of the respiratory chain that catalyzes the reduction of oxygen to water. Electrons originating from reduced cytochrome c in the intermembrane space (IMS) are transferred via the dinuclear copper A center (CU(A)) of subunit 2 and heme A of subunit 1 to the active site in subunit 1, a binuclear center (BNC) formed by heme A3 and copper B (CU(B)). The BNC reduces molecular oxygen to 2 water molecules using 4 electrons from cytochrome c in the IMS and 4 protons from the mitochondrial matrix. This chain is Cytochrome c oxidase subunit 2 (MT-CO2), found in Varecia variegata (Black-and-white ruffed lemur).